The primary structure comprises 395 residues: Putative 8-amino-7-oxononanoate synthase (395 aa).

Arginine 23 contributes to the substrate binding site. 110–111 (GY) is a binding site for pyridoxal 5'-phosphate. Residue histidine 135 participates in substrate binding. Pyridoxal 5'-phosphate contacts are provided by residues serine 182, 207–210 (DEAH), and 239–242 (TFSK). Residue lysine 242 is modified to N6-(pyridoxal phosphate)lysine. A substrate-binding site is contributed by threonine 356.

Belongs to the class-II pyridoxal-phosphate-dependent aminotransferase family. BioF subfamily. As to quaternary structure, homodimer. Pyridoxal 5'-phosphate is required as a cofactor.

It catalyses the reaction 6-carboxyhexanoyl-[ACP] + L-alanine + H(+) = (8S)-8-amino-7-oxononanoate + holo-[ACP] + CO2. The protein operates within cofactor biosynthesis; biotin biosynthesis. Catalyzes the decarboxylative condensation of pimeloyl-[acyl-carrier protein] and L-alanine to produce 8-amino-7-oxononanoate (AON), [acyl-carrier protein], and carbon dioxide. The protein is Putative 8-amino-7-oxononanoate synthase (bioF) of Bacillus cereus (strain ZK / E33L).